The chain runs to 191 residues: Adenine phosphoribosyltransferase (191 aa).

Belongs to the purine/pyrimidine phosphoribosyltransferase family. In terms of assembly, homodimer.

It localises to the cytoplasm. The enzyme catalyses AMP + diphosphate = 5-phospho-alpha-D-ribose 1-diphosphate + adenine. Its pathway is purine metabolism; AMP biosynthesis via salvage pathway; AMP from adenine: step 1/1. In terms of biological role, catalyzes a salvage reaction resulting in the formation of AMP, that is energically less costly than de novo synthesis. The chain is Adenine phosphoribosyltransferase from Nocardia farcinica (strain IFM 10152).